The sequence spans 1219 residues: A disintegrin and metalloproteinase with thrombospondin motifs 18 (1219 aa).

A signal peptide spans 1 to 47 (MECALLCLCALRAAGPGPPWGPAGLGRLAKALQLCCFCCASVAVALA). A propeptide spanning residues 48 to 284 (SDSGSSGGSG…EYGGTGRPRR (237 aa)) is cleaved from the precursor. N-linked (GlcNAc...) asparagine glycosylation is found at Asn-151 and Asn-190. A disordered region spans residues 217 to 248 (YPGSQRTYPGHSPSHTPPASQSQEPEYSHRRW). The span at 218-241 (PGSQRTYPGHSPSHTPPASQSQEP) shows a compositional bias: polar residues. The Peptidase M12B domain maps to 293–498 (LNVETLVVAD…PQAGCLVDEP (206 aa)). Intrachain disulfides connect Cys-369/Cys-420, Cys-395/Cys-402, Cys-414/Cys-493, Cys-453/Cys-477, Cys-521/Cys-546, Cys-532/Cys-553, Cys-541/Cys-572, Cys-566/Cys-577, Cys-601/Cys-638, Cys-605/Cys-643, and Cys-616/Cys-628. His-436 is a binding site for Zn(2+). Residue Glu-437 is part of the active site. Positions 440 and 446 each coordinate Zn(2+). The TSP type-1 1 domain occupies 589–644 (HGQWSAWSKWSECSRTCGGGVKFQERHCSNPKPQYGGKYCPGSSRIYKLCNINPCP). 4 N-linked (GlcNAc...) asparagine glycosylation sites follow: Asn-745, Asn-838, Asn-865, and Asn-909. TSP type-1 domains follow at residues 931-990 (CPAY…NSHA), 991-1049 (CPPE…GRCP), 1052-1116 (NRLQ…RTCP), and 1121-1176 (AVAS…NFCP). Residues 1182–1219 (DDPSCVDFFSWCHLVPQHGVCNHKFYGKQCCRSCTRKS) form the PLAC domain.

Zn(2+) serves as cofactor. Post-translationally, the precursor is cleaved by a furin endopeptidase. Glycosylated. Can be O-fucosylated by POFUT2 on a serine or a threonine residue found within the consensus sequence C1-X(2)-(S/T)-C2-G of the TSP type-1 repeat domains where C1 and C2 are the first and second cysteine residue of the repeat, respectively. Fucosylated repeats can then be further glycosylated by the addition of a beta-1,3-glucose residue by the glucosyltransferase, B3GALTL. Fucosylation mediates the efficient secretion of ADAMTS family members. Can also be C-glycosylated with one or two mannose molecules on tryptophan residues within the consensus sequence W-X-X-W of the TPRs, and N-glycosylated. These other glycosylations can also facilitate secretion.

The protein localises to the secreted. It localises to the extracellular space. It is found in the extracellular matrix. This Mus musculus (Mouse) protein is A disintegrin and metalloproteinase with thrombospondin motifs 18 (Adamts18).